The sequence spans 272 residues: Phosphate import ATP-binding protein PstB 1 (272 aa).

The 242-residue stretch at Ile26 to Ile267 folds into the ABC transporter domain. Gly58–Ser65 serves as a coordination point for ATP.

This sequence belongs to the ABC transporter superfamily. Phosphate importer (TC 3.A.1.7) family. In terms of assembly, the complex is composed of two ATP-binding proteins (PstB), two transmembrane proteins (PstC and PstA) and a solute-binding protein (PstS).

Its subcellular location is the cell inner membrane. It carries out the reaction phosphate(out) + ATP + H2O = ADP + 2 phosphate(in) + H(+). Part of the ABC transporter complex PstSACB involved in phosphate import. Responsible for energy coupling to the transport system. This Vibrio parahaemolyticus serotype O3:K6 (strain RIMD 2210633) protein is Phosphate import ATP-binding protein PstB 1.